A 186-amino-acid chain; its full sequence is dCTP deaminase (186 aa).

107-112 serves as a coordination point for dCTP; the sequence is KSTYAR. Glu-133 acts as the Proton donor/acceptor in catalysis. Residues Gln-152, Tyr-166, and Gln-176 each coordinate dCTP.

Belongs to the dCTP deaminase family. Homotrimer.

The enzyme catalyses dCTP + H2O + H(+) = dUTP + NH4(+). It participates in pyrimidine metabolism; dUMP biosynthesis; dUMP from dCTP (dUTP route): step 1/2. Its function is as follows. Catalyzes the deamination of dCTP to dUTP. This chain is dCTP deaminase, found in Campylobacter jejuni subsp. jejuni serotype O:6 (strain 81116 / NCTC 11828).